We begin with the raw amino-acid sequence, 284 residues long: Bifunctional protein FolD (284 aa).

NADP(+) contacts are provided by residues 165 to 167 (GRS) and S190.

The protein belongs to the tetrahydrofolate dehydrogenase/cyclohydrolase family. In terms of assembly, homodimer.

The catalysed reaction is (6R)-5,10-methylene-5,6,7,8-tetrahydrofolate + NADP(+) = (6R)-5,10-methenyltetrahydrofolate + NADPH. The enzyme catalyses (6R)-5,10-methenyltetrahydrofolate + H2O = (6R)-10-formyltetrahydrofolate + H(+). It participates in one-carbon metabolism; tetrahydrofolate interconversion. Functionally, catalyzes the oxidation of 5,10-methylenetetrahydrofolate to 5,10-methenyltetrahydrofolate and then the hydrolysis of 5,10-methenyltetrahydrofolate to 10-formyltetrahydrofolate. This chain is Bifunctional protein FolD, found in Streptococcus pyogenes serotype M2 (strain MGAS10270).